The primary structure comprises 765 residues: LPS-assembly protein LptD (765 aa).

A signal peptide spans 1–18; sequence MQIRYFLALSLLPQVVLA.

The protein belongs to the LptD family. Component of the lipopolysaccharide transport and assembly complex. Interacts with LptE and LptA.

It localises to the cell outer membrane. Together with LptE, is involved in the assembly of lipopolysaccharide (LPS) at the surface of the outer membrane. This Shewanella sp. (strain ANA-3) protein is LPS-assembly protein LptD.